The chain runs to 482 residues: MASFSAETNSTDLLSQPWNEPPVILSMVILSLTFLLGLPGNGLVLWVAGLKMQRTVNTVWFLHLTLADLLCCLSLPFSLAHLALQGQWPYGRFLCELIPSIIVLNMFASVFLLTAISLDRCLVVFKPIWCQNHRNVGTACSICGCIWVVAFVMCIPVFVYREIFTADNHNRCGYKFGLSSSLDYPDFYGDPLENRSLENIVQLPGEMNDRLDPSSFQTNDHPWTVPTVFQPQTFQRPSADSLHRDSARLTSQNLYSNVFKPADVVSPKIPSGFPIKDQETSPLDNSDAFLSTHLKLFPSASSNSFYESELPQDFQDYYNLGQFEDDNQVPTPLVAITITRLVVGFLLPSVIMIACYSFIVFRMQRGRFAKSQSKTFRVAVVVVAVFLVCWTPYHIFGVLSLLIDPESPLGKTLMSWDHVSIALASANSCFNPFLYALLGKDFRKKARQSIQGILEAAFSEELTRSTHCNSNNVFSERNSTTV.

At M1 to V23 the chain is on the extracellular side. N-linked (GlcNAc...) asparagine glycosylation is present at N9. A helical transmembrane segment spans residues I24–W46. The Cytoplasmic segment spans residues V47–N57. Residues T58–A80 form a helical membrane-spanning segment. Over H81–E96 the chain is Extracellular. C95 and C172 are disulfide-bonded. Residues L97 to L118 form a helical membrane-spanning segment. Topologically, residues D119–A139 are cytoplasmic. The chain crosses the membrane as a helical span at residues C140–Y160. At R161–R340 the chain is on the extracellular side. Y174 and Y184 each carry sulfotyrosine. N194 carries N-linked (GlcNAc...) asparagine glycosylation. Y318 carries the post-translational modification Sulfotyrosine. Residues L341–V360 form a helical membrane-spanning segment. The Cytoplasmic portion of the chain corresponds to F361–R377. The helical transmembrane segment at V378–S400 threads the bilayer. Residues L401–D417 are Extracellular-facing. A helical membrane pass occupies residues H418–L438. The Cytoplasmic segment spans residues G439–V482. Phosphoserine is present on S459. T463 bears the Phosphothreonine mark.

This sequence belongs to the G-protein coupled receptor 1 family. In terms of assembly, interacts with VGF-derived peptide TLQP-21. Post-translationally, among the sulfation sites Tyr-174 is essential for binding of C3a anaphylatoxin.

The protein localises to the cell membrane. Functionally, receptor for the chemotactic and inflammatory peptide anaphylatoxin C3a. This receptor stimulates chemotaxis, granule enzyme release and superoxide anion production. This is C3a anaphylatoxin chemotactic receptor (C3AR1) from Pongo abelii (Sumatran orangutan).